Reading from the N-terminus, the 163-residue chain is Crossover junction endodeoxyribonuclease RuvC (163 aa).

Active-site residues include aspartate 4, glutamate 65, and aspartate 138. Residues aspartate 4, glutamate 65, and aspartate 138 each coordinate Mg(2+).

It belongs to the RuvC family. Homodimer which binds Holliday junction (HJ) DNA. The HJ becomes 2-fold symmetrical on binding to RuvC with unstacked arms; it has a different conformation from HJ DNA in complex with RuvA. In the full resolvosome a probable DNA-RuvA(4)-RuvB(12)-RuvC(2) complex forms which resolves the HJ. Requires Mg(2+) as cofactor.

It localises to the cytoplasm. The enzyme catalyses Endonucleolytic cleavage at a junction such as a reciprocal single-stranded crossover between two homologous DNA duplexes (Holliday junction).. Its function is as follows. The RuvA-RuvB-RuvC complex processes Holliday junction (HJ) DNA during genetic recombination and DNA repair. Endonuclease that resolves HJ intermediates. Cleaves cruciform DNA by making single-stranded nicks across the HJ at symmetrical positions within the homologous arms, yielding a 5'-phosphate and a 3'-hydroxyl group; requires a central core of homology in the junction. The consensus cleavage sequence is 5'-(A/T)TT(C/G)-3'. Cleavage occurs on the 3'-side of the TT dinucleotide at the point of strand exchange. HJ branch migration catalyzed by RuvA-RuvB allows RuvC to scan DNA until it finds its consensus sequence, where it cleaves and resolves the cruciform DNA. The sequence is that of Crossover junction endodeoxyribonuclease RuvC from Corynebacterium diphtheriae (strain ATCC 700971 / NCTC 13129 / Biotype gravis).